The primary structure comprises 632 residues: Biosynthetic arginine decarboxylase (632 aa).

At Lys-101 the chain carries N6-(pyridoxal phosphate)lysine. Phe-281 to Tyr-291 contacts substrate.

This sequence belongs to the Orn/Lys/Arg decarboxylase class-II family. SpeA subfamily. Mg(2+) is required as a cofactor. Pyridoxal 5'-phosphate serves as cofactor.

It catalyses the reaction L-arginine + H(+) = agmatine + CO2. It functions in the pathway amine and polyamine biosynthesis; agmatine biosynthesis; agmatine from L-arginine: step 1/1. In terms of biological role, catalyzes the biosynthesis of agmatine from arginine. The polypeptide is Biosynthetic arginine decarboxylase (Escherichia coli O157:H7 (strain EC4115 / EHEC)).